The following is a 401-amino-acid chain: Heparan-sulfate 6-O-sulfotransferase 1 (401 aa).

Residues 1 to 4 (MVER) lie on the Cytoplasmic side of the membrane. Residues 5–27 (ASKFVLVVAGSACFMLILYQYAG) form a helical; Signal-anchor for type II membrane protein membrane-spanning segment. Residues 28–401 (PGLSLGAPGG…DYMSHIIEKW (374 aa)) lie on the Lumenal side of the membrane. Residue 83–91 (HIQKTGGTT) participates in 3'-phosphoadenylyl sulfate binding. Substrate-binding positions include 113-114 (KK), R130, W135, and H140. The active-site Proton acceptor is the H140. R175 and S183 together coordinate 3'-phosphoadenylyl sulfate. The substrate site is built by H187 and W194. A glycan (N-linked (GlcNAc...) asparagine) is linked at N254. Residue 307 to 309 (MQY) coordinates 3'-phosphoadenylyl sulfate. N-linked (GlcNAc...) asparagine glycosylation occurs at N310. 313–314 (RA) contacts 3'-phosphoadenylyl sulfate. Positions 367–389 (ERLLHRSKEALPREDTEEPGRVP) are disordered.

The protein belongs to the sulfotransferase 6 family. Post-translationally, N-glycosylated.

It localises to the membrane. The catalysed reaction is alpha-D-glucosaminyl-[heparan sulfate](n) + 3'-phosphoadenylyl sulfate = 6-sulfo-alpha-D-glucosaminyl-[heparan sulfate](n) + adenosine 3',5'-bisphosphate + H(+). With respect to regulation, inhibited by dithiothreitol and stimulated by protamine. In terms of biological role, 6-O-sulfation enzyme which catalyzes the transfer of sulfate from 3'-phosphoadenosine 5'-phosphosulfate (PAPS) to position 6 of the N-sulfoglucosamine residue (GlcNS) of heparan sulfate. Also transfers sulfate to CDSNS-heparin and performs the crucial step modification in the biosynthesis of anticoagulant heparan sulfate (HSact). Critical for normal neuronal development where it may play a role in neuron branching. May also play a role in limb development. May prefer iduronic acid. In Cricetulus griseus (Chinese hamster), this protein is Heparan-sulfate 6-O-sulfotransferase 1.